The primary structure comprises 325 residues: Cytochrome c biogenesis protein CcsA (325 aa).

Helical transmembrane passes span 12 to 32 (HISFSVVSILISIHLITLLFV), 45 to 65 (GMIITFFCITGLLVTRWVFSG), 72 to 92 (LYESLIFLSWTFSIFYMVPYF), 100 to 120 (LNTIITPSVIFTQGFATSGLL), 145 to 165 (MILGYATLLCGSLLSVAILVI), 231 to 251 (TISLGFIFLTIGIISGAVWAN), 264 to 281 (ETWAFITWTIFAIYLHTR), and 293 to 313 (IVASIGFLIIWVCYLGINLLG).

Belongs to the CcmF/CycK/Ccl1/NrfE/CcsA family. In terms of assembly, may interact with Ccs1.

It localises to the plastid. The protein localises to the chloroplast thylakoid membrane. Functionally, required during biogenesis of c-type cytochromes (cytochrome c6 and cytochrome f) at the step of heme attachment. This chain is Cytochrome c biogenesis protein CcsA, found in Glycine max (Soybean).